The following is a 254-amino-acid chain: Peroxisomal membrane protein 11-2 (254 aa).

Residues 1 to 113 (MVTAAGSPSS…YHPHPHVHPL (113 aa)) are Cytoplasmic-facing. A helical transmembrane segment spans residues 114-134 (LVLLAYGGQGVYNFLEQFAWL). Topologically, residues 135 to 227 (AKAGLLPARL…TVGDVTGRKG (93 aa)) are lumenal. A helical transmembrane segment spans residues 228-247 (LLGSSTLMASAGLLSALISV). The Cytoplasmic portion of the chain corresponds to 248–254 (HKNWNSC).

This sequence belongs to the peroxin-11 family.

Its subcellular location is the peroxisome membrane. Functionally, involved in peroxisomal proliferation. In Oryza sativa subsp. japonica (Rice), this protein is Peroxisomal membrane protein 11-2 (PEX11-2).